The following is a 385-amino-acid chain: S-adenosylmethionine synthase (385 aa).

Residue His15 participates in ATP binding. Position 17 (Asp17) interacts with Mg(2+). Residue Glu43 coordinates K(+). Positions 56 and 99 each coordinate L-methionine. A flexible loop region spans residues 99-109 (QSPDINQGVDR). ATP contacts are provided by residues 164–166 (DAK), 230–231 (RF), Asp239, 245–246 (RK), Ala262, and Lys266. Position 239 (Asp239) interacts with L-methionine. Lys270 provides a ligand contact to L-methionine.

This sequence belongs to the AdoMet synthase family. As to quaternary structure, homotetramer; dimer of dimers. Mg(2+) is required as a cofactor. K(+) serves as cofactor.

It is found in the cytoplasm. It catalyses the reaction L-methionine + ATP + H2O = S-adenosyl-L-methionine + phosphate + diphosphate. It participates in amino-acid biosynthesis; S-adenosyl-L-methionine biosynthesis; S-adenosyl-L-methionine from L-methionine: step 1/1. Its function is as follows. Catalyzes the formation of S-adenosylmethionine (AdoMet) from methionine and ATP. The overall synthetic reaction is composed of two sequential steps, AdoMet formation and the subsequent tripolyphosphate hydrolysis which occurs prior to release of AdoMet from the enzyme. In Sodalis glossinidius (strain morsitans), this protein is S-adenosylmethionine synthase.